The following is a 258-amino-acid chain: Ribosomal RNA small subunit methyltransferase J (258 aa).

S-adenosyl-L-methionine is bound by residues 123 to 124 (ER) and aspartate 177. Residues 232-258 (IDGPKPSHSLEGKSSRYDIYPKKALKA) are disordered. The segment covering 239–252 (HSLEGKSSRYDIYP) has biased composition (basic and acidic residues).

Belongs to the methyltransferase superfamily. RsmJ family.

The protein resides in the cytoplasm. The enzyme catalyses guanosine(1516) in 16S rRNA + S-adenosyl-L-methionine = N(2)-methylguanosine(1516) in 16S rRNA + S-adenosyl-L-homocysteine + H(+). Its function is as follows. Specifically methylates the guanosine in position 1516 of 16S rRNA. The chain is Ribosomal RNA small subunit methyltransferase J from Pseudomonas putida (strain GB-1).